The chain runs to 328 residues: Ethanol acetyltransferase 1 (328 aa).

One can recognise an AB hydrolase-1 domain in the interval 39 to 309; sequence PAIINIHGLL…TGHNLLLENP (271 aa). Active-site charge relay system residues include Ser-115, Asp-139, and His-302.

Belongs to the AB hydrolase superfamily.

Its subcellular location is the mitochondrion. The catalysed reaction is ethanol + acetyl-CoA = ethyl acetate + CoA. The enzyme catalyses acetyl-CoA + H2O = acetate + CoA + H(+). It catalyses the reaction ethyl acetate + H2O = ethanol + acetate + H(+). In terms of biological role, alcohol acetyltransferase that catalyzes the synthesis of ethyl acetate from ethanol and acetyl-CoA. Can also function as a thioesterase by hydrolyzing acetyl-CoA in the absence of ethanol, as well as esterase hydrolyzing ethyl acetate. The chain is Ethanol acetyltransferase 1 from Saccharomyces cerevisiae (strain ATCC 204508 / S288c) (Baker's yeast).